A 241-amino-acid chain; its full sequence is Uridylate kinase (241 aa).

ATP is bound at residue Lys-11–Gly-14. Residues Gly-19–Gly-24 form an involved in allosteric activation by GTP region. Gly-53 is a UMP binding site. 2 residues coordinate ATP: Gly-54 and Arg-58. UMP-binding positions include Asp-74 and Thr-135 to Thr-142. ATP is bound by residues Thr-162, Tyr-168, and Asp-171.

The protein belongs to the UMP kinase family. In terms of assembly, homohexamer.

The protein resides in the cytoplasm. The enzyme catalyses UMP + ATP = UDP + ADP. It participates in pyrimidine metabolism; CTP biosynthesis via de novo pathway; UDP from UMP (UMPK route): step 1/1. Allosterically activated by GTP. Inhibited by UTP. In terms of biological role, catalyzes the reversible phosphorylation of UMP to UDP. This is Uridylate kinase from Wolinella succinogenes (strain ATCC 29543 / DSM 1740 / CCUG 13145 / JCM 31913 / LMG 7466 / NCTC 11488 / FDC 602W) (Vibrio succinogenes).